The sequence spans 105 residues: Large ribosomal subunit protein uL24 (105 aa).

This sequence belongs to the universal ribosomal protein uL24 family. Part of the 50S ribosomal subunit.

Its function is as follows. One of two assembly initiator proteins, it binds directly to the 5'-end of the 23S rRNA, where it nucleates assembly of the 50S subunit. One of the proteins that surrounds the polypeptide exit tunnel on the outside of the subunit. In Staphylococcus haemolyticus (strain JCSC1435), this protein is Large ribosomal subunit protein uL24.